A 182-amino-acid chain; its full sequence is Biotin carboxyl carrier protein of acetyl-CoA carboxylase (182 aa).

The disordered stretch occupies residues 70 to 95 (AAPSPSPEPGTSRAADHAVTSSGSQP). The Biotinyl-binding domain occupies 104-180 (LAEVASPMVG…EYNQPLMRIK (77 aa)). The residue at position 146 (Lys146) is an N6-biotinyllysine.

Homodimer.

It participates in lipid metabolism; fatty acid biosynthesis. This protein is a component of the acetyl coenzyme A carboxylase complex; first, biotin carboxylase catalyzes the carboxylation of the carrier protein and then the transcarboxylase transfers the carboxyl group to form malonyl-CoA. In Nostoc sp. (strain PCC 7120 / SAG 25.82 / UTEX 2576), this protein is Biotin carboxyl carrier protein of acetyl-CoA carboxylase (accB).